The sequence spans 307 residues: Haloalkane dehalogenase (307 aa).

Positions 34-158 (PVLFLHGNPT…FQAFRTADVG (125 aa)) constitute an AB hydrolase-1 domain. Asp106 acts as the Nucleophile in catalysis. Glu130 serves as the catalytic Proton donor. The Proton acceptor role is filled by His272.

It belongs to the haloalkane dehalogenase family. Type 2 subfamily. As to quaternary structure, monomer.

It catalyses the reaction 1-haloalkane + H2O = a halide anion + a primary alcohol + H(+). Its pathway is xenobiotic degradation; 1,2-dibromoethane degradation. In terms of biological role, catalyzes hydrolytic cleavage of carbon-halogen bonds in halogenated aliphatic compounds, leading to the formation of the corresponding primary alcohols, halide ions and protons. Has a broad substrate specificity, which includes mono- and di-chlorinated and brominated alkanes. The highest activity was found with 1,2-dibromoethane, whereas low activity was measured with the analog 1,2-dichloroethane. In Mycobacterium sp. (strain GP1), this protein is Haloalkane dehalogenase (dhaAF).